A 256-amino-acid chain; its full sequence is MFEAEFKTGAVLKRLVETFKDLLPHATFDCDNRGVSMQVMDTSHVALVSLQLHAEGFKKYRCDRNVPLNVSINSLSKIVKCVNERSSVLMKAEDQGDVMAFVFNNDNRICTYTLKLMCIDVEHLGIPDSDYDCVVHMSSVEFAQVCKDMTQFDHDIIVSCSKKGLQFRANGDIGSADVQMSADNENFSVLKAKQTVTHTFAGDYLCHFAKAAPLAPTVTIYMSEELPFKLEYCIKDVGVLACFLAPKIVNNDEEIF.

The DNA-binding element occupies 61–80 (RCDRNVPLNVSINSLSKIVK).

The protein belongs to the PCNA family.

Stimulates the viral DNA replication. The virus utilizes both cellular and viral PCNAs during viral DNA replication in order to produce budded virus (BV). In addition, stimulates the expression of late genes 38K and VP39 by promoting the transcription of IE2. The polypeptide is Probable DNA polymerase sliding clamp (PCNA) (Lepidoptera (butterflies and moths)).